The chain runs to 193 residues: Acyl carrier protein phosphodiesterase (193 aa).

It belongs to the AcpH family.

It catalyses the reaction holo-[ACP] + H2O = apo-[ACP] + (R)-4'-phosphopantetheine + H(+). Converts holo-ACP to apo-ACP by hydrolytic cleavage of the phosphopantetheine prosthetic group from ACP. The sequence is that of Acyl carrier protein phosphodiesterase from Shigella boydii serotype 4 (strain Sb227).